The following is a 418-amino-acid chain: Type II methyltransferase M.MspI (418 aa).

One can recognise an SAM-dependent MTase C5-type domain in the interval 105-404; that stretch reads FKFIDLFSGI…EQISLALKTV (300 aa). C174 is a catalytic residue.

This sequence belongs to the class I-like SAM-binding methyltransferase superfamily. C5-methyltransferase family.

The enzyme catalyses a 2'-deoxycytidine in DNA + S-adenosyl-L-methionine = a 5-methyl-2'-deoxycytidine in DNA + S-adenosyl-L-homocysteine + H(+). A methylase, recognizes the double-stranded sequence 5'-CCGG-3', methylates C-1 on both strands, and protects the DNA from cleavage by the MspI endonuclease. This Moraxella sp protein is Type II methyltransferase M.MspI (mspIM).